The chain runs to 359 residues: MQTLADLLNTIPAIDPAAMSRAQRHIDGLLKPVGSLGRLEALAIQLAGMPGLNGIPHVGKKAVLVMCADHGVWEEGVAISPKEVTAIQAENMTRGTTGVCVLAAQAGANVHVVDVGIDTAEPIPGLINMRVARGSGNIASAPAMSRRQAEKLLLDVICYTRELAKNGVTLFGVGELGMANTTPAAAIVSTITGRDPEEVVGIGANLPTDKLANKIDVVRRAITLNQPNPQDGVDVLAKVGGFDLVGMAGVMLGAASCGLPVLLDGFLSYAAALAACQMSPAIKPYLTPSHLSAEKGARIALSHLGLEPYLDMEMRLGEGSGAALAMPIIEAACAIYNNMGELAASNIVLPGNTTSDLNS.

E318 serves as the catalytic Proton acceptor.

This sequence belongs to the CobT family. In terms of assembly, homodimer.

It carries out the reaction 5,6-dimethylbenzimidazole + nicotinate beta-D-ribonucleotide = alpha-ribazole 5'-phosphate + nicotinate + H(+). The protein operates within nucleoside biosynthesis; alpha-ribazole biosynthesis; alpha-ribazole from 5,6-dimethylbenzimidazole: step 1/2. Functionally, catalyzes the synthesis of alpha-ribazole-5'-phosphate from nicotinate mononucleotide (NAMN) and 5,6-dimethylbenzimidazole (DMB). The protein is Nicotinate-nucleotide--dimethylbenzimidazole phosphoribosyltransferase of Escherichia coli (strain ATCC 8739 / DSM 1576 / NBRC 3972 / NCIMB 8545 / WDCM 00012 / Crooks).